The chain runs to 876 residues: Leucine--tRNA ligase (876 aa).

A 'HIGH' region motif is present at residues 43–53 (PYPSGRIHMGH). The 'KMSKS' region signature appears at 632-636 (KMSKS). Lysine 635 serves as a coordination point for ATP.

It belongs to the class-I aminoacyl-tRNA synthetase family.

Its subcellular location is the cytoplasm. It carries out the reaction tRNA(Leu) + L-leucine + ATP = L-leucyl-tRNA(Leu) + AMP + diphosphate. In Rhodopseudomonas palustris (strain ATCC BAA-98 / CGA009), this protein is Leucine--tRNA ligase.